Consider the following 334-residue polypeptide: MFRWERSIPLRGSAAALCNNLSVLQLPARNLTYFGVVHGPSAQLLSAAPEGVPLAQRQLHAKEGAGVSPPLITQVHWCVLPFRVLLVLTSHRGIQMYESNGYTMVYWHALDSGDASPVQAVFARGIAASGHFICVGTWSGRVLVFDIPAKGPNIVLSEELAGHQMPITDIATEPAQGQDCVADMVTADDSGLLCVWRSGPEFTLLTRIPGFGVPCPSVQLWQGIIAAGYGNGQVHLYEATTGNLHVQINAHARAICALDLASEVGKLLSAGEDTFVHIWKLSRNPESGYIEVEHCHGECVADTQLCGARFCDSSGNSFAVTGYDLAEIRRFSSV.

WD repeat units lie at residues 162-206 (GHQM…TLLT), 208-247 (IPGFGVPCPSVQLWQGIIAAGYGNGQVHLYEATTGNLHVQ), and 250-289 (AHARAICALDLASEVGKLLSAGEDTFVHIWKLSRNPESGY).

In terms of assembly, homodimer and homotrimer; forms tight forms of dimers and trimers. Interacts with IZUMO1 and IZUMO1R/JUNO. Cross-linked to tightly form both dimers and trimers by TGM2. Cross-linking enhances the activation of EGF receptor-mediated signaling pathway. Cross-linking is inhibited by EGF. Post-translationally, ubiquitinated. EGF increases ubiquitination. Expressed in epithelial cells (at protein level). Isoform 3 expression is highly increased in colorectal cancer cells.

It localises to the vesicle. It is found in the cytoplasm. The protein localises to the cell membrane. Its function is as follows. Plays a role in the adhesion and fusion of the sperm-oocyte membrane through its interactions with IZUMO1 and IZUMO1R/JUNO. When cross-linked to form dimers and trimers, it has a regulatory effect on ERK signaling pathway activity in response to EGF stimulation. Colocalizes with the EGF receptor in WDR54-specific vesicle where it sustains the internalization and controls the degradation of the EGF receptor after EGF stimulation. The protein is WD repeat-containing protein 54 of Homo sapiens (Human).